A 393-amino-acid polypeptide reads, in one-letter code: UDP-N-acetylglucosamine--N-acetylmuramyl-(pentapeptide) pyrophosphoryl-undecaprenol N-acetylglucosamine transferase (393 aa).

UDP-N-acetyl-alpha-D-glucosamine is bound by residues 15–17 (TAG), asparagine 129, arginine 171, serine 211, and glutamine 322.

Belongs to the glycosyltransferase 28 family. MurG subfamily.

It is found in the cell membrane. It carries out the reaction di-trans,octa-cis-undecaprenyl diphospho-N-acetyl-alpha-D-muramoyl-L-alanyl-D-glutamyl-meso-2,6-diaminopimeloyl-D-alanyl-D-alanine + UDP-N-acetyl-alpha-D-glucosamine = di-trans,octa-cis-undecaprenyl diphospho-[N-acetyl-alpha-D-glucosaminyl-(1-&gt;4)]-N-acetyl-alpha-D-muramoyl-L-alanyl-D-glutamyl-meso-2,6-diaminopimeloyl-D-alanyl-D-alanine + UDP + H(+). The protein operates within cell wall biogenesis; peptidoglycan biosynthesis. Functionally, cell wall formation. Catalyzes the transfer of a GlcNAc subunit on undecaprenyl-pyrophosphoryl-MurNAc-pentapeptide (lipid intermediate I) to form undecaprenyl-pyrophosphoryl-MurNAc-(pentapeptide)GlcNAc (lipid intermediate II). The chain is UDP-N-acetylglucosamine--N-acetylmuramyl-(pentapeptide) pyrophosphoryl-undecaprenol N-acetylglucosamine transferase from Bifidobacterium longum (strain DJO10A).